The chain runs to 229 residues: Large ribosomal subunit protein uL1 (229 aa).

The protein belongs to the universal ribosomal protein uL1 family. Part of the 50S ribosomal subunit.

Functionally, binds directly to 23S rRNA. The L1 stalk is quite mobile in the ribosome, and is involved in E site tRNA release. Protein L1 is also a translational repressor protein, it controls the translation of the L11 operon by binding to its mRNA. The polypeptide is Large ribosomal subunit protein uL1 (Actinobacillus pleuropneumoniae serotype 3 (strain JL03)).